Here is a 201-residue protein sequence, read N- to C-terminus: Homeobox protein goosecoid-2 (201 aa).

Disordered regions lie at residues 1-55, 95-124, and 179-201; these read MATA…PEAP, PATP…RRTR, and RHQK…KESC. The span at 95-106 shows a compositional bias: low complexity; the sequence is PATPSPLTAPRA. The segment at residues 123-182 is a DNA-binding region (homeobox); sequence TRRHRTIFSEEQLQALEALFVQNQYPDVGTRERLAVRIRLREERVEVWFKNRRAKWRHQK.

The protein belongs to the paired homeobox family. Bicoid subfamily. Expressed in adult testis.

It is found in the nucleus. Functionally, may have a role in development. May regulate its own transcription. May bind the bicoid consensus sequence TAATCC. This chain is Homeobox protein goosecoid-2 (Gsc2), found in Mus musculus (Mouse).